A 369-amino-acid chain; its full sequence is Alanine racemase (369 aa).

Catalysis depends on Lys-35, which acts as the Proton acceptor; specific for D-alanine. N6-(pyridoxal phosphate)lysine is present on Lys-35. Position 130 (Arg-130) interacts with substrate. Tyr-257 (proton acceptor; specific for L-alanine) is an active-site residue. Met-305 is a binding site for substrate.

This sequence belongs to the alanine racemase family. It depends on pyridoxal 5'-phosphate as a cofactor.

It catalyses the reaction L-alanine = D-alanine. The protein operates within amino-acid biosynthesis; D-alanine biosynthesis; D-alanine from L-alanine: step 1/1. Functionally, catalyzes the interconversion of L-alanine and D-alanine. May also act on other amino acids. The sequence is that of Alanine racemase (alr) from Paracidovorax citrulli (strain AAC00-1) (Acidovorax citrulli).